The chain runs to 340 residues: Probable quinone oxidoreductase (340 aa).

Belongs to the zinc-containing alcohol dehydrogenase family. Quinone oxidoreductase subfamily.

The enzyme catalyses 2 a quinone + NADPH + H(+) = 2 a 1,4-benzosemiquinone + NADP(+). The protein is Probable quinone oxidoreductase of Leishmania amazonensis.